Consider the following 346-residue polypeptide: Sulfate/thiosulfate import ATP-binding protein CysA 1 (346 aa).

Positions 3–237 (VKVSGITKQF…PNSPFVFSFI (235 aa)) constitute an ABC transporter domain. 35-42 (GPSGSGKT) contributes to the ATP binding site.

This sequence belongs to the ABC transporter superfamily. Sulfate/tungstate importer (TC 3.A.1.6) family. As to quaternary structure, the complex is composed of two ATP-binding proteins (CysA), two transmembrane proteins (CysT and CysW) and a solute-binding protein (CysP).

The protein localises to the cell inner membrane. It carries out the reaction sulfate(out) + ATP + H2O = sulfate(in) + ADP + phosphate + H(+). The enzyme catalyses thiosulfate(out) + ATP + H2O = thiosulfate(in) + ADP + phosphate + H(+). Part of the ABC transporter complex CysAWTP involved in sulfate/thiosulfate import. Responsible for energy coupling to the transport system. In Agrobacterium fabrum (strain C58 / ATCC 33970) (Agrobacterium tumefaciens (strain C58)), this protein is Sulfate/thiosulfate import ATP-binding protein CysA 1.